The sequence spans 92 residues: DNA-directed RNA polymerase subunit omega (92 aa).

Belongs to the RNA polymerase subunit omega family. As to quaternary structure, the RNAP catalytic core consists of 2 alpha, 1 beta, 1 beta' and 1 omega subunit. When a sigma factor is associated with the core the holoenzyme is formed, which can initiate transcription.

It catalyses the reaction RNA(n) + a ribonucleoside 5'-triphosphate = RNA(n+1) + diphosphate. Promotes RNA polymerase assembly. Latches the N- and C-terminal regions of the beta' subunit thereby facilitating its interaction with the beta and alpha subunits. The sequence is that of DNA-directed RNA polymerase subunit omega from Acinetobacter baumannii (strain AB307-0294).